The following is a 101-amino-acid chain: Ribonuclease kappa-B (101 aa).

2 consecutive transmembrane segments (helical) span residues Ala-13–Phe-33 and Val-68–Cys-88.

Belongs to the RNase K family.

Its subcellular location is the membrane. In terms of biological role, endoribonuclease which preferentially cleaves ApU and ApG phosphodiester bonds. The polypeptide is Ribonuclease kappa-B (rnasekb) (Danio rerio (Zebrafish)).